The sequence spans 583 residues: ATP-dependent lipid A-core flippase (583 aa).

Transmembrane regions (helical) follow at residues 27-47 (LAVAVVALIINAVSDTYMVSL), 69-89 (LLVFGLMFIRGISSFVSTYCL), 142-162 (ALVSIVREGTSIIGLLVLMFY), 165-185 (WQLSLVLILVAPVVAWAIGFV), and 249-269 (AAANPIIQMIASIAIVVVLYL). An ABC transmembrane type-1 domain is found at 28–310 (AVAVVALIIN…LTNVTSQFQR (283 aa)). Positions 342–578 (VNVKDISFTY…DGAYAQLHRI (237 aa)) constitute an ABC transporter domain. 376–383 (GRSGSGKS) provides a ligand contact to ATP.

It belongs to the ABC transporter superfamily. Lipid exporter (TC 3.A.1.106) family. As to quaternary structure, homodimer.

It localises to the cell inner membrane. It carries out the reaction ATP + H2O + lipid A-core oligosaccharideSide 1 = ADP + phosphate + lipid A-core oligosaccharideSide 2.. Functionally, involved in lipopolysaccharide (LPS) biosynthesis. Translocates lipid A-core from the inner to the outer leaflet of the inner membrane. Transmembrane domains (TMD) form a pore in the inner membrane and the ATP-binding domain (NBD) is responsible for energy generation. The polypeptide is ATP-dependent lipid A-core flippase (Vibrio vulnificus (strain CMCP6)).